Here is a 262-residue protein sequence, read N- to C-terminus: Pyridoxine 5'-phosphate synthase (262 aa).

Asparagine 6 is a binding site for 3-amino-2-oxopropyl phosphate. Position 8–9 (8–9) interacts with 1-deoxy-D-xylulose 5-phosphate; sequence DH. Arginine 17 lines the 3-amino-2-oxopropyl phosphate pocket. Histidine 42 serves as the catalytic Proton acceptor. Arginine 44 and histidine 49 together coordinate 1-deoxy-D-xylulose 5-phosphate. Glutamate 69 functions as the Proton acceptor in the catalytic mechanism. 1-deoxy-D-xylulose 5-phosphate is bound at residue threonine 99. Histidine 213 (proton donor) is an active-site residue. Residues glycine 214 and 235-236 each bind 3-amino-2-oxopropyl phosphate; that span reads GH.

Belongs to the PNP synthase family. Homooctamer; tetramer of dimers.

Its subcellular location is the cytoplasm. It catalyses the reaction 3-amino-2-oxopropyl phosphate + 1-deoxy-D-xylulose 5-phosphate = pyridoxine 5'-phosphate + phosphate + 2 H2O + H(+). The protein operates within cofactor biosynthesis; pyridoxine 5'-phosphate biosynthesis; pyridoxine 5'-phosphate from D-erythrose 4-phosphate: step 5/5. Catalyzes the complicated ring closure reaction between the two acyclic compounds 1-deoxy-D-xylulose-5-phosphate (DXP) and 3-amino-2-oxopropyl phosphate (1-amino-acetone-3-phosphate or AAP) to form pyridoxine 5'-phosphate (PNP) and inorganic phosphate. This chain is Pyridoxine 5'-phosphate synthase, found in Wolinella succinogenes (strain ATCC 29543 / DSM 1740 / CCUG 13145 / JCM 31913 / LMG 7466 / NCTC 11488 / FDC 602W) (Vibrio succinogenes).